The chain runs to 510 residues: Maturase K (510 aa).

The protein belongs to the intron maturase 2 family. MatK subfamily.

The protein localises to the plastid. Its subcellular location is the chloroplast. Its function is as follows. Usually encoded in the trnK tRNA gene intron. Probably assists in splicing its own and other chloroplast group II introns. The protein is Maturase K of Grahamia bracteata.